Here is a 483-residue protein sequence, read N- to C-terminus: Glycogen synthase (483 aa).

Residue Lys15 coordinates ADP-alpha-D-glucose.

This sequence belongs to the glycosyltransferase 1 family. Bacterial/plant glycogen synthase subfamily.

It catalyses the reaction [(1-&gt;4)-alpha-D-glucosyl](n) + ADP-alpha-D-glucose = [(1-&gt;4)-alpha-D-glucosyl](n+1) + ADP + H(+). It participates in glycan biosynthesis; glycogen biosynthesis. Functionally, synthesizes alpha-1,4-glucan chains using ADP-glucose. The polypeptide is Glycogen synthase (Alkalilimnicola ehrlichii (strain ATCC BAA-1101 / DSM 17681 / MLHE-1)).